The chain runs to 183 residues: Ribosome rescue factor SmrB (183 aa).

The 76-residue stretch at 98–173 (LDLHGLTQLQ…GDAALLVLIE (76 aa)) folds into the Smr domain.

This sequence belongs to the SmrB family. In terms of assembly, associates with collided ribosomes, but not with correctly translating polysomes.

Functionally, acts as a ribosome collision sensor. Detects stalled/collided disomes (pairs of ribosomes where the leading ribosome is stalled and a second ribosome has collided with it) and endonucleolytically cleaves mRNA at the 5' boundary of the stalled ribosome. Stalled/collided disomes form a new interface (primarily via the 30S subunits) that binds SmrB. Cleaved mRNA becomes available for tmRNA ligation, leading to ribosomal subunit dissociation and rescue of stalled ribosomes. This is Ribosome rescue factor SmrB from Escherichia coli O7:K1 (strain IAI39 / ExPEC).